A 404-amino-acid chain; its full sequence is Cysteine desulfurase IscS (404 aa).

Pyridoxal 5'-phosphate is bound by residues 75–76 (AT), Asn155, Gln183, and 203–205 (SAH). Lys206 is modified (N6-(pyridoxal phosphate)lysine). Thr243 serves as a coordination point for pyridoxal 5'-phosphate. Cys328 functions as the Cysteine persulfide intermediate in the catalytic mechanism. Position 328 (Cys328) interacts with [2Fe-2S] cluster.

This sequence belongs to the class-V pyridoxal-phosphate-dependent aminotransferase family. NifS/IscS subfamily. As to quaternary structure, homodimer. Forms a heterotetramer with IscU, interacts with other sulfur acceptors. It depends on pyridoxal 5'-phosphate as a cofactor.

Its subcellular location is the cytoplasm. It carries out the reaction (sulfur carrier)-H + L-cysteine = (sulfur carrier)-SH + L-alanine. The protein operates within cofactor biosynthesis; iron-sulfur cluster biosynthesis. Master enzyme that delivers sulfur to a number of partners involved in Fe-S cluster assembly, tRNA modification or cofactor biosynthesis. Catalyzes the removal of elemental sulfur atoms from cysteine to produce alanine. Functions as a sulfur delivery protein for Fe-S cluster synthesis onto IscU, an Fe-S scaffold assembly protein, as well as other S acceptor proteins. The chain is Cysteine desulfurase IscS from Shewanella loihica (strain ATCC BAA-1088 / PV-4).